The primary structure comprises 593 residues: MTVLQQPADLDDACLRARAVAAARGDARFDVLVAGGTVVDVVTGECRAADVGIVGALIASVHAPGSRSDADTVIDAAGAYISPGLIDTHMHVESSMVTPAVYAAAVVPRGVTTVVWDPHEFGNVSGLAGVRWAVDAMGGLPLRAVVLAPSCVPSAPGLEVAGADFDADAVAEMLSWPEIGGIAEVMNMRGVIDGDPRMTAIVEAGLKAGKPVNGHARGLEGADLQAFVTAGVSSDHELVSGDDLIAKLRAGLSIELRGSHDHLLPEFVIALGTLGHLPQTVTLCTDDVFPDDLHRDGGLDDVVRRLVRYGLKAEWALQAATLNAARRLGRADLGLIAPGRRADIVLFEDIRDFRALHVLANGRLVASGGGMLQAPVAAGVSPLRHTMKIEPLTEDDFRIAATGSTARVVTIDRPRFTRWGETRAEVSGGYLVPPKGMTLIAVAHRHGRADSRPRVGLLEGWGEWRGAFATTVSHDSHNLTVFGSSPRDMRVAANAVIEAGGGMAVVAEGKVEALLPLPLCGLVSDAPLAEVAAGFAAIREAAGRIVEWQPPYLVFKACFGATLACNAGPHQTDRGIADVATGKLLESPVLETF.

The protein belongs to the metallo-dependent hydrolases superfamily. Adenine deaminase family. It depends on Mn(2+) as a cofactor.

The catalysed reaction is adenine + H2O + H(+) = hypoxanthine + NH4(+). The chain is Adenine deaminase 2 from Rhizobium meliloti (strain 1021) (Ensifer meliloti).